The chain runs to 343 residues: Ribosomal RNA small subunit methyltransferase C (343 aa).

The protein belongs to the methyltransferase superfamily. RsmC family. Monomer.

Its subcellular location is the cytoplasm. The catalysed reaction is guanosine(1207) in 16S rRNA + S-adenosyl-L-methionine = N(2)-methylguanosine(1207) in 16S rRNA + S-adenosyl-L-homocysteine + H(+). Functionally, specifically methylates the guanine in position 1207 of 16S rRNA in the 30S particle. In Escherichia fergusonii (strain ATCC 35469 / DSM 13698 / CCUG 18766 / IAM 14443 / JCM 21226 / LMG 7866 / NBRC 102419 / NCTC 12128 / CDC 0568-73), this protein is Ribosomal RNA small subunit methyltransferase C.